The chain runs to 804 residues: MSLETSTTTPAGSPLSDRELDLIDKYWRAANYLSVGQIYLLDNPLLKEPLSAEHVKPRLLGHWGTTPGLNLVYAHLNRIIRNRDADVIYVTGPGHGGPGLVANAYLEGTYSEVYTGIEEDAEGLRKLFRQFSFPGGIPSHVAAQTPGSIHEGGELGYALVHAYGAAFDNPYLVVACVIGDGEAETGPLAAGWHSNKFLNPVTDGAVLPILALNGYKIANPTVLARIPHTELEALLRGYGYRPITVAGDDPTDVHRQLAAALDEAFDGIAAIQGAARGGGEVQRPVWPMIVLRTPKGWTGPKVVDGKRVEGTWRSHQVPLAETHDNPEHRAQLEEWLRSYGPEQLFDDDGRLRAELRALAPTGDRRMSANPHANGGLLLHDLDLPDFRDYAVPVSRPGSVTHEATRVLGTFLRDVIARNKDRFRMMGPDETASNRLDAVYGATEKVWLSATEPDDEHLAPDGRVMEVLSEHLCQGWLEGYLLTGRHGLFNCYEAFVHIVDSMLNQHAKWLATSRELPWRRPIASLNYLLTSHVWRQDHNGASHQDPGFIDLVANKRAELTRVYLPPDGNTLLSVADHCLRSRDYINVIVAGKQPALAYLDMDAAIAHCTRGLGIWDWASTARSIGAEPDVVLACAGDIPTLETLAAADILRRELPDLAVRVVNVVDLMRLQPDSEHPHGLPDREFDALFTRDRPVIFAYHGYPWLIHRLTYRRANHAQLHVRGFKERGTTTTPFDMVMLNDLDRFHLVIDVLDRVEGLASRAAMLRQRMVDARLAARMYTREHGEDDPAIANWTWEPSERNSRSE.

Belongs to the XFP family. The cofactor is thiamine diphosphate.

The chain is Probable phosphoketolase from Mycolicibacterium paratuberculosis (strain ATCC BAA-968 / K-10) (Mycobacterium paratuberculosis).